Reading from the N-terminus, the 528-residue chain is Facilitator of iron transport 1 (528 aa).

Residues 1–18 form the signal peptide; that stretch reads MKLSSAFVLSAITVAALG. Tandem repeats lie at residues 20 to 98, 99 to 168, and 169 to 233. The 4 X approximate tandem repeats stretch occupies residues 20–274; the sequence is SITTTITATK…ERAPASTVAT (255 aa). 3 disordered regions span residues 79-100, 145-172, and 214-234; these read SIVE…GSSI, AAET…SITT, and ASPV…SGSS. Polar residues-rich tracts occupy residues 81 to 93 and 145 to 163; these read VEPS…TSAD and AAET…TSAD. A 1-4; truncated repeat occupies 234 to 274; sequence SITTTITATKNGHVYTKTVTQDATFVWTGEGERAPASTVAT. Repeat copies occupy residues 289 to 294, 295 to 300, 301 to 306, 307 to 312, 313 to 318, 319 to 324, 325 to 330, 331 to 336, 337 to 342, 343 to 348, 349 to 353, and 354 to 359. Residues 289 to 359 form a 12 X 6 AA approximate tandem repeats, Ser/Thr-rich region; that stretch reads SIVEASSAVE…AVETSAVETS (71 aa). Composition is skewed to low complexity over residues 298–388 and 398–435; these read ETSS…QASS and TSSV…SSAT. Residues 298–471 form a disordered region; that stretch reads ETSSAAETSS…SNNWSSSSSA (174 aa). An N-linked (GlcNAc...) asparagine glycan is attached at asparagine 412. The span at 446–457 shows a compositional bias: polar residues; sequence YTESSSRDAQSV. Over residues 462 to 471 the composition is skewed to low complexity; that stretch reads SNNWSSSSSA. A glycan (N-linked (GlcNAc...) asparagine) is linked at asparagine 464. Position 488-495 (488-495) interacts with ATP; sequence GIFTNGKS. The N-linked (GlcNAc...) asparagine glycan is linked to asparagine 503. The GPI-anchor amidated glycine moiety is linked to residue glycine 506. The propeptide at 507–528 is removed in mature form; that stretch reads AADSIAAGTGLMGAALAAVIFL.

Post-translationally, the GPI-anchor is attached to the protein in the endoplasmic reticulum and serves to target the protein to the cell surface. There, the glucosamine-inositol phospholipid moiety is cleaved off and the GPI-modified mannoprotein is covalently attached via its lipidless GPI glycan remnant to the 1,6-beta-glucan of the outer cell wall layer.

It localises to the secreted. The protein localises to the cell wall. It is found in the membrane. Functionally, involved in the uptake of non-siderophore sources of iron and the siderophores ferrioxamine B and ferrichrome. Has a role in the retention of iron in the cell wall and periplasmic space. This chain is Facilitator of iron transport 1 (FIT1), found in Saccharomyces cerevisiae (strain ATCC 204508 / S288c) (Baker's yeast).